Reading from the N-terminus, the 539-residue chain is GMP synthase [glutamine-hydrolyzing] (539 aa).

The Glutamine amidotransferase type-1 domain occupies 4-202; that stretch reads KILILDFGSQ…VLDIAGAKPD (199 aa). The Nucleophile role is filled by Cys-81. Catalysis depends on residues His-176 and Glu-178. Residues 203 to 395 form the GMPS ATP-PPase domain; that stretch reads WIMRDHIEEA…LGLPAEMVYR (193 aa). 230–236 contributes to the ATP binding site; that stretch reads SGGVDSS.

In terms of assembly, homodimer.

It catalyses the reaction XMP + L-glutamine + ATP + H2O = GMP + L-glutamate + AMP + diphosphate + 2 H(+). It functions in the pathway purine metabolism; GMP biosynthesis; GMP from XMP (L-Gln route): step 1/1. Catalyzes the synthesis of GMP from XMP. The protein is GMP synthase [glutamine-hydrolyzing] of Burkholderia pseudomallei (strain 1106a).